The primary structure comprises 314 residues: DNA oxidative demethylase ALKBH2 (314 aa).

Over residues 1–28 (MTNPLNSTAANRSNQPSSDGISDGQITN) the composition is skewed to polar residues. A disordered region spans residues 1-75 (MTNPLNSTAA…KRFHYHQDQR (75 aa)). Positions 57 to 75 (NGKDDSDTKKRFHYHQDQR) are enriched in basic and acidic residues. Residues W132 and 160–163 (ALVY) contribute to the substrate site. Residues 194–314 (RFNSLLLNRY…RINLTFRLVL (121 aa)) form the Fe2OG dioxygenase domain. 2-oxoglutarate is bound at residue 201–203 (NRY). Positions 213 and 215 each coordinate Fe cation. D216 serves as a coordination point for substrate. A disordered region spans residues 242–271 (KKDEESSQGKTGDSGPAKKRLKRSSREDQQ). Residue H293 coordinates Fe cation. Residues R305 and 305 to 311 (RINLTFR) contribute to the 2-oxoglutarate site.

The protein belongs to the alkB family. It depends on Fe(2+) as a cofactor. In terms of tissue distribution, expressed ubiquitously, including in seedlings, leaves and flowers.

Its subcellular location is the nucleus. It catalyses the reaction a methylated nucleobase within DNA + 2-oxoglutarate + O2 = a nucleobase within DNA + formaldehyde + succinate + CO2. Dioxygenase that repairs alkylated DNA containing 1-methyladenine and 1-ethenoadenine by oxidative demethylation. Accepts double-stranded and single-stranded substrates, with a preference for dsDNA over ssDNA. Confers resistance to methylating agents such as methylmethanesulphonate (MMS). This Arabidopsis thaliana (Mouse-ear cress) protein is DNA oxidative demethylase ALKBH2 (ALKBH2).